The primary structure comprises 259 residues: S-methyl-5'-thioadenosine phosphorylase (259 aa).

Phosphate-binding positions include Ser9 and 50-51 (RH). Met175 is a binding site for substrate. Thr176 is a phosphate binding site. Residue 199-201 (DLD) coordinates substrate.

This sequence belongs to the PNP/MTAP phosphorylase family. MTAP subfamily. Homohexamer. Dimer of a homotrimer.

The catalysed reaction is S-methyl-5'-thioadenosine + phosphate = 5-(methylsulfanyl)-alpha-D-ribose 1-phosphate + adenine. The protein operates within amino-acid biosynthesis; L-methionine biosynthesis via salvage pathway; S-methyl-5-thio-alpha-D-ribose 1-phosphate from S-methyl-5'-thioadenosine (phosphorylase route): step 1/1. Its function is as follows. Catalyzes the reversible phosphorylation of S-methyl-5'-thioadenosine (MTA) to adenine and 5-methylthioribose-1-phosphate. Involved in the breakdown of MTA, a major by-product of polyamine biosynthesis. Responsible for the first step in the methionine salvage pathway after MTA has been generated from S-adenosylmethionine. Has broad substrate specificity with 6-aminopurine nucleosides as preferred substrates. The chain is S-methyl-5'-thioadenosine phosphorylase from Mycolicibacterium smegmatis (strain ATCC 700084 / mc(2)155) (Mycobacterium smegmatis).